The primary structure comprises 343 residues: N-acetyl-gamma-glutamyl-phosphate reductase (343 aa).

Cysteine 146 is a catalytic residue.

It belongs to the NAGSA dehydrogenase family. Type 1 subfamily.

It is found in the cytoplasm. It catalyses the reaction N-acetyl-L-glutamate 5-semialdehyde + phosphate + NADP(+) = N-acetyl-L-glutamyl 5-phosphate + NADPH + H(+). It functions in the pathway amino-acid biosynthesis; L-arginine biosynthesis; N(2)-acetyl-L-ornithine from L-glutamate: step 3/4. In terms of biological role, catalyzes the NADPH-dependent reduction of N-acetyl-5-glutamyl phosphate to yield N-acetyl-L-glutamate 5-semialdehyde. In Arthrobacter sp. (strain FB24), this protein is N-acetyl-gamma-glutamyl-phosphate reductase.